The primary structure comprises 106 residues: Nucleoid-associated protein XCV1128 (106 aa).

Positions 81–106 are disordered; that stretch reads IDAESKDRMGSATAGMQLPPGMKLPF.

This sequence belongs to the YbaB/EbfC family. In terms of assembly, homodimer.

The protein resides in the cytoplasm. It is found in the nucleoid. Functionally, binds to DNA and alters its conformation. May be involved in regulation of gene expression, nucleoid organization and DNA protection. The chain is Nucleoid-associated protein XCV1128 from Xanthomonas euvesicatoria pv. vesicatoria (strain 85-10) (Xanthomonas campestris pv. vesicatoria).